The primary structure comprises 258 residues: Hydroxyacylglutathione hydrolase (258 aa).

Positions 52, 54, 56, 57, 109, 126, and 164 each coordinate Zn(2+).

It belongs to the metallo-beta-lactamase superfamily. Glyoxalase II family. As to quaternary structure, monomer. Zn(2+) serves as cofactor.

It catalyses the reaction an S-(2-hydroxyacyl)glutathione + H2O = a 2-hydroxy carboxylate + glutathione + H(+). It functions in the pathway secondary metabolite metabolism; methylglyoxal degradation; (R)-lactate from methylglyoxal: step 2/2. In terms of biological role, thiolesterase that catalyzes the hydrolysis of S-D-lactoyl-glutathione to form glutathione and D-lactic acid. This Xylella fastidiosa (strain M23) protein is Hydroxyacylglutathione hydrolase.